We begin with the raw amino-acid sequence, 144 residues long: Bombinins BLP-7/GH-2 (144 aa).

The N-terminal stretch at 1–18 is a signal peptide; it reads MNFKYIVAVSFLIASTYA. The propeptide occupies 19 to 43; the sequence is RSVKNDEQSLSQRDVLEEESLREIR. Asparagine amide is present on N70. Residues 74–123 constitute a propeptide that is removed on maturation; sequence TAEEHEVMKRLEAVMRDLDSLDYPEEASEMETRSFNQEEIANLFTKKEKR. An Isoleucine amide modification is found at I143.

It belongs to the bombinin family. In terms of tissue distribution, expressed by the skin glands.

The protein resides in the secreted. Antimicrobial peptide with activity against Gram-positive and -negative bacteria and fungi. Shows activity against P.acnes (MIC=5 uM), E.coli (MIC=5-6.3 uM), S.aureus (MIC=5-6.3 uM), M.luteus, S.cerevisiae and C.albicans (MIC=10-12.5 uM). Also reduces the production of interleukin (IL)-8 and granulocyte-macrophage colony stimulating factor (CSF2) in normal human epidermal keratinocytes (NHEKs). Shows anticancer activity against three human hepatoma cell lines. In vivo, using the rat ear edema model, suppress P.acnes-induced skin inflammation, significantly reducing the ear thickness. Shows weak hemolytic activity against human erythrocytes. Functionally, shows weak antimicrobial activity but high hemolytic activity. This is Bombinins BLP-7/GH-2 from Bombina orientalis (Oriental fire-bellied toad).